A 398-amino-acid chain; its full sequence is UPF0261 protein RA0729 (398 aa).

This sequence belongs to the UPF0261 family.

The chain is UPF0261 protein RA0729 from Rhizobium meliloti (strain 1021) (Ensifer meliloti).